The chain runs to 451 residues: Cysteine protease ATG4 (451 aa).

The active-site Nucleophile is the Cys122. Residues Asp297 and His299 contribute to the active site.

Belongs to the peptidase C54 family. In terms of assembly, interacts with ATG8.

It is found in the cytoplasm. The protein localises to the nucleus. The protein resides in the preautophagosomal structure. It carries out the reaction [protein]-C-terminal L-amino acid-glycyl-phosphatidylethanolamide + H2O = [protein]-C-terminal L-amino acid-glycine + a 1,2-diacyl-sn-glycero-3-phosphoethanolamine. Its function is as follows. Cysteine protease that plays a key role in cytoplasm to vacuole transport (Cvt) and autophagy by mediating both proteolytic activation and delipidation of ATG8. Required for selective autophagic degradation of the nucleus (nucleophagy) as well as for mitophagy which contributes to regulate mitochondrial quantity and quality by eliminating the mitochondria to a basal level to fulfill cellular energy requirements and preventing excess ROS production. The protease activity is required for proteolytic activation of ATG8: cleaves the C-terminal amino acid of ATG8 to reveal a C-terminal glycine. ATG8 ubiquitin-like activity requires the exposure of the glycine at the C-terminus for its conjugation to phosphatidylethanolamine (PE) and its insertion to membranes, which is necessary for autophagy. The ATG8-PE conjugate mediates tethering between adjacent membranes and stimulates membrane hemifusion, leading to expansion of the autophagosomal membrane during autophagy. In addition to the protease activity, also catalyzes deconjugation of PE-conjugated forms of ATG8 during macroautophagy: ATG8 delipidation is required to release the protein from membranes, which facilitates multiple events during macroautophagy, and especially for efficient autophagosome biogenesis, the assembly of ATG9-containing tubulovesicular clusters into phagophores/autophagosomes, and for the disassembly of PAS-associated ATG components. ATG8 delipidation by ATG4 also recycles ATG8-PE generated on inappropriate membranes to maintain a reservoir of unlipidated ATG8 that is required for autophagosome formation at the PAS. In Kluyveromyces marxianus (strain DMKU3-1042 / BCC 29191 / NBRC 104275) (Yeast), this protein is Cysteine protease ATG4.